The primary structure comprises 459 residues: Cyclin-dependent kinase F-4 (459 aa).

In terms of domain architecture, Protein kinase spans 4–283 (FKMIKEVGDG…AAEVLQHTFF (280 aa)). Residues 10-18 (VGDGTFGSV) and lysine 33 contribute to the ATP site. The Proton acceptor role is filled by aspartate 125. At serine 151 the chain carries Phosphoserine. Threonine 156 carries the phosphothreonine modification. The disordered stretch occupies residues 310–397 (KGVSEHGMPR…RHSRSLPETG (88 aa)). Composition is skewed to polar residues over residues 322–346 (STGT…SKTG) and 366–375 (ESNNKLTTNR).

This sequence belongs to the protein kinase superfamily. CMGC Ser/Thr protein kinase family. CDC2/CDKX subfamily.

It catalyses the reaction L-seryl-[protein] + ATP = O-phospho-L-seryl-[protein] + ADP + H(+). The enzyme catalyses L-threonyl-[protein] + ATP = O-phospho-L-threonyl-[protein] + ADP + H(+). It carries out the reaction [DNA-directed RNA polymerase] + ATP = phospho-[DNA-directed RNA polymerase] + ADP + H(+). In Oryza sativa subsp. japonica (Rice), this protein is Cyclin-dependent kinase F-4 (CDKF-4).